Reading from the N-terminus, the 363-residue chain is MSGYGLPISQEVAKELAENARKIAAPGKGILAADESTGTIKKRFDSIGVENTEANRAFYRDLLFSTKGLGQYISGAILFEETLYQKSPSGVPMVDLLKAEGIIPGIKVDKGLETLPLTDDEKATMGLDGLSERCKKYYEAGARFAKWRAVLSIDPAKGKPTNLSITEVAHGLARYAAICQANRLVPIVEPEILTDGSHDITVCAEVTERVLAAVFKALNDHHVLLEGALLKPNMVTHGSDCPKPASHEEIAFYTVRSLKRTVPPALPGVMFLSGGQSEEDASLNLNEMNKMGPHPFQLSFSYGRALQASCLKAWKGVPENKAKAQQVLMERARANGEAQLGKYGGGAGGALAASSLFEKRYVY.

D34 is a dihydroxyacetone phosphate binding site. Residues S36 and T39 each coordinate D-glyceraldehyde 3-phosphate. Residue R43 participates in beta-D-fructose 1,6-bisphosphate binding. K107 lines the D-glyceraldehyde 3-phosphate pocket. Position 146 (K146) interacts with dihydroxyacetone phosphate. E189 provides a ligand contact to D-glyceraldehyde 3-phosphate. The Proton acceptor role is filled by E189. Residues K231, S273, and G274 each contribute to the dihydroxyacetone phosphate site. Residue K231 is the Schiff-base intermediate with dihydroxyacetone phosphate of the active site. Residues 273–275 (SGG) and S301 contribute to the beta-D-fructose 1,6-bisphosphate site. Dihydroxyacetone phosphate is bound by residues G303 and R304. R304 contributes to the beta-D-fructose 1,6-bisphosphate binding site.

The protein belongs to the class I fructose-bisphosphate aldolase family. In terms of assembly, homotetramer. Component of a complex, at least composed of ald-1, microneme protein MIC2 and ACT1. Interacts with microneme protein MIC2 (via cytoplasmic tail). Interacts with ACT1 (F-actin).

It localises to the cytoplasm. It catalyses the reaction beta-D-fructose 1,6-bisphosphate = D-glyceraldehyde 3-phosphate + dihydroxyacetone phosphate. The protein operates within carbohydrate degradation; glycolysis; D-glyceraldehyde 3-phosphate and glycerone phosphate from D-glucose: step 4/4. In terms of biological role, plays a key role in glycolysis by catalyzing the cleavage of fructose 1,6-bisphosphate into dihydroxyacetone phosphate and glyceraldehyde 3-phosphate. Forms a bridge between cell surface adhesins and the actin cytoskeleton. Required for parasite invasion of host cells. This Toxoplasma gondii protein is Fructose-bisphosphate aldolase 1.